A 323-amino-acid polypeptide reads, in one-letter code: DNA-directed RNA polymerase subunit alpha 1 (323 aa).

The alpha N-terminal domain (alpha-NTD) stretch occupies residues 1 to 228 (MSNNNSKLEF…EQISVFVSLR (228 aa)). Residues 244 to 323 (IDPILLKPID…DNFRELVEGK (80 aa)) form an alpha C-terminal domain (alpha-CTD) region.

This sequence belongs to the RNA polymerase alpha chain family. Homodimer. The RNAP catalytic core consists of 2 alpha, 1 beta, 1 beta' and 1 omega subunit. When a sigma factor is associated with the core the holoenzyme is formed, which can initiate transcription.

It carries out the reaction RNA(n) + a ribonucleoside 5'-triphosphate = RNA(n+1) + diphosphate. Its function is as follows. DNA-dependent RNA polymerase catalyzes the transcription of DNA into RNA using the four ribonucleoside triphosphates as substrates. The chain is DNA-directed RNA polymerase subunit alpha 1 from Francisella tularensis subsp. tularensis (strain FSC 198).